Consider the following 1207-residue polypeptide: DNA-directed RNA polymerase subunit beta' (1207 aa).

4 residues coordinate Zn(2+): cysteine 60, cysteine 62, cysteine 75, and cysteine 78. Mg(2+) contacts are provided by aspartate 450, aspartate 452, and aspartate 454. Positions 819, 893, 900, and 903 each coordinate Zn(2+).

The protein belongs to the RNA polymerase beta' chain family. As to quaternary structure, the RNAP catalytic core consists of 2 alpha, 1 beta, 1 beta' and 1 omega subunit. When a sigma factor is associated with the core the holoenzyme is formed, which can initiate transcription. Mg(2+) is required as a cofactor. It depends on Zn(2+) as a cofactor.

The catalysed reaction is RNA(n) + a ribonucleoside 5'-triphosphate = RNA(n+1) + diphosphate. DNA-dependent RNA polymerase catalyzes the transcription of DNA into RNA using the four ribonucleoside triphosphates as substrates. The polypeptide is DNA-directed RNA polymerase subunit beta' (Streptococcus pyogenes serotype M3 (strain SSI-1)).